A 315-amino-acid chain; its full sequence is Lipoyl synthase (315 aa).

Positions 62, 67, 73, 88, 92, 95, and 302 each coordinate [4Fe-4S] cluster. The region spanning 74 to 292 (FNHGTATFMI…KIALKLGFIR (219 aa)) is the Radical SAM core domain.

It belongs to the radical SAM superfamily. Lipoyl synthase family. [4Fe-4S] cluster serves as cofactor.

It is found in the cytoplasm. The catalysed reaction is [[Fe-S] cluster scaffold protein carrying a second [4Fe-4S](2+) cluster] + N(6)-octanoyl-L-lysyl-[protein] + 2 oxidized [2Fe-2S]-[ferredoxin] + 2 S-adenosyl-L-methionine + 4 H(+) = [[Fe-S] cluster scaffold protein] + N(6)-[(R)-dihydrolipoyl]-L-lysyl-[protein] + 4 Fe(3+) + 2 hydrogen sulfide + 2 5'-deoxyadenosine + 2 L-methionine + 2 reduced [2Fe-2S]-[ferredoxin]. Its pathway is protein modification; protein lipoylation via endogenous pathway; protein N(6)-(lipoyl)lysine from octanoyl-[acyl-carrier-protein]: step 2/2. In terms of biological role, catalyzes the radical-mediated insertion of two sulfur atoms into the C-6 and C-8 positions of the octanoyl moiety bound to the lipoyl domains of lipoate-dependent enzymes, thereby converting the octanoylated domains into lipoylated derivatives. This is Lipoyl synthase from Vesicomyosocius okutanii subsp. Calyptogena okutanii (strain HA).